A 75-amino-acid chain; its full sequence is DNA-directed RNA polymerase subunit omega (75 aa).

It belongs to the RNA polymerase subunit omega family. The RNAP catalytic core consists of 2 alpha, 1 beta, 1 beta' and 1 omega subunit. When a sigma factor is associated with the core the holoenzyme is formed, which can initiate transcription.

It carries out the reaction RNA(n) + a ribonucleoside 5'-triphosphate = RNA(n+1) + diphosphate. Promotes RNA polymerase assembly. Latches the N- and C-terminal regions of the beta' subunit thereby facilitating its interaction with the beta and alpha subunits. The chain is DNA-directed RNA polymerase subunit omega from Thermosipho melanesiensis (strain DSM 12029 / CIP 104789 / BI429).